The following is a 191-amino-acid chain: Probable DNA-directed RNA polymerase subunit delta (191 aa).

An HTH HARE-type domain is found at 14–83 (LSMIEVARAI…GDNKWGLRSW (70 aa)). 2 stretches are compositionally biased toward acidic residues: residues 119–133 (EDAIDYNDDDPEDEN) and 143–191 (YDND…ETND). A disordered region spans residues 119-191 (EDAIDYNDDD…DDDYEDETND (73 aa)).

The protein belongs to the RpoE family. RNAP is composed of a core of 2 alpha, a beta and a beta' subunits. The core is associated with a delta subunit and one of several sigma factors.

In terms of biological role, participates in both the initiation and recycling phases of transcription. In the presence of the delta subunit, RNAP displays an increased specificity of transcription, a decreased affinity for nucleic acids, and an increased efficiency of RNA synthesis because of enhanced recycling. The protein is Probable DNA-directed RNA polymerase subunit delta of Streptococcus thermophilus (strain ATCC BAA-491 / LMD-9).